We begin with the raw amino-acid sequence, 216 residues long: Adenylate kinase (216 aa).

10–15 is an ATP binding site; that stretch reads GAGKGT. Residues 30–59 are NMP; it reads STGDIFRYNIKQGTELGKKAKSYMDQGLLV. Residues T31, R36, 57–59, 85–88, and Q92 contribute to the AMP site; these read LLV and GFPR. The segment at 126-163 is LID; that stretch reads GRRICRECGATFHVQYNPSTKGALCDQCGGELYQRDDD. R127 contributes to the ATP binding site. Positions 130 and 133 each coordinate Zn(2+). 136–137 is a binding site for ATP; sequence TF. C150 and C153 together coordinate Zn(2+). Positions 160 and 171 each coordinate AMP. K199 lines the ATP pocket.

Belongs to the adenylate kinase family. In terms of assembly, monomer.

The protein resides in the cytoplasm. The catalysed reaction is AMP + ATP = 2 ADP. It participates in purine metabolism; AMP biosynthesis via salvage pathway; AMP from ADP: step 1/1. Its function is as follows. Catalyzes the reversible transfer of the terminal phosphate group between ATP and AMP. Plays an important role in cellular energy homeostasis and in adenine nucleotide metabolism. The protein is Adenylate kinase of Alkaliphilus oremlandii (strain OhILAs) (Clostridium oremlandii (strain OhILAs)).